Here is a 53-residue protein sequence, read N- to C-terminus: UPF0391 membrane protein YtjA (53 aa).

The next 2 membrane-spanning stretches (helical) occupy residues 4–24 and 30–48; these read WGII…GGLA and AAKI…SLFM.

Belongs to the UPF0391 family.

Its subcellular location is the cell membrane. The polypeptide is UPF0391 membrane protein YtjA (Escherichia coli O6:K15:H31 (strain 536 / UPEC)).